Consider the following 432-residue polypeptide: MVTSAFQTAQSHRLFAEAQQLMPGGVNSPVRAFKSVGSEPVFIERAEGAYLWDVDGNRYIEYINTWGPSIVGHSHPEVISALREALPKGTSYGAPTRLENQMARTVIDAIPAVEMVRFVNSGTEATMSALRLARAFTGREKIIKFEGCYHGHADMLLVQAGSGVATLGLPDSPGVPKSTTAATLTAPYNDLAAVEALFKQYPSDVAGLILEPVVGNAGCLVPEIGFLEGLRDLTHAHGTVLIFDEVMTGFRLSYGGAQARYGIEPDLTCLGKIIGGGLPVGAYAGRREIMQMVAPAGPMYQAGTLSGNPLAMTAGIKTLEILQRPGTYERLEGLSARLADGLLAAAREAGHAATGNRVGAMFTLFFTEGPVRNFADAKRSDLQKFARFHRGMLERGVYLAPSQFEAGFMSLAHTEEDIDYTVAAARTVLAAL.

An N6-(pyridoxal phosphate)lysine modification is found at K272.

It belongs to the class-III pyridoxal-phosphate-dependent aminotransferase family. HemL subfamily. Homodimer. Pyridoxal 5'-phosphate is required as a cofactor.

It is found in the cytoplasm. The enzyme catalyses (S)-4-amino-5-oxopentanoate = 5-aminolevulinate. Its pathway is porphyrin-containing compound metabolism; protoporphyrin-IX biosynthesis; 5-aminolevulinate from L-glutamyl-tRNA(Glu): step 2/2. It participates in porphyrin-containing compound metabolism; chlorophyll biosynthesis. The polypeptide is Glutamate-1-semialdehyde 2,1-aminomutase (Gloeobacter violaceus (strain ATCC 29082 / PCC 7421)).